Consider the following 233-residue polypeptide: MNPDEDTEWNDILRSKGILPEKEPDVDDVLDDALVDAKQLAHENRLENKDLDELAELEDEEDDEFLQMYRNKRMQEWKDQMSKAKFGSVYPISKPEYTAEVTDASKEVFVVVHMFQDSLPACKLLAAILERLAPMYPQIKFVKIPGKQAVENYPEAMMPTLLIYGHGDLQQQILTLATLGGMNTSVVDVAEALVRAGALKDSDIAALKDPQNAEDELGKRDSSVNDDLDDDFD.

One can recognise a Phosducin domain in the interval E58–N212. Positions F86–D233 are thioredoxin fold. Residues L207–D233 are disordered. 2 positions are modified to phosphoserine: S222 and S223. A compositionally biased stretch (acidic residues) spans V224–D233.

Belongs to the phosducin family.

In Schizosaccharomyces pombe (strain 972 / ATCC 24843) (Fission yeast), this protein is Phosducin-like protein C2A9.09.